The primary structure comprises 230 residues: LexA repressor (230 aa).

Residues 1-21 (MSDDSSETRTGGRRGADAGLT) form a disordered region. The segment at residues 44 to 64 (IREIGDAVGLTSTSSVAHQLR) is a DNA-binding region (H-T-H motif). Catalysis depends on for autocatalytic cleavage activity residues Ser-154 and Lys-191.

The protein belongs to the peptidase S24 family. As to quaternary structure, homodimer.

The catalysed reaction is Hydrolysis of Ala-|-Gly bond in repressor LexA.. Functionally, represses a number of genes involved in the response to DNA damage (SOS response), including recA and lexA. In the presence of single-stranded DNA, RecA interacts with LexA causing an autocatalytic cleavage which disrupts the DNA-binding part of LexA, leading to derepression of the SOS regulon and eventually DNA repair. This Mycobacterium sp. (strain JLS) protein is LexA repressor.